Here is a 741-residue protein sequence, read N- to C-terminus: Pentatricopeptide repeat-containing protein At1g05670, mitochondrial (741 aa).

Residues 1–21 (MKKPFTGLLMKRGTLSSFRNF) constitute a mitochondrion transit peptide. PPR repeat units follow at residues 174-208 (DPRV…GLVL), 209-244 (SVDS…GVCW), 245-279 (NVAS…GYTP), 280-314 (DVIS…GLKP), 315-349 (NSYI…GILP), 350-384 (DTVV…DITP), 385-419 (DVLT…GLEP), 420-454 (DSVT…GCSP), 455-489 (NVVT…GLQP), 490-524 (NIFT…GLNA), 525-559 (DTVT…GLQP), 560-594 (TIVT…GIAP), 595-629 (NATT…GVGP), 630-664 (DGKT…GFSV), and 665-699 (SVST…GLAA).

This sequence belongs to the PPR family. P subfamily.

The protein localises to the mitochondrion. The chain is Pentatricopeptide repeat-containing protein At1g05670, mitochondrial from Arabidopsis thaliana (Mouse-ear cress).